The sequence spans 634 residues: TATA box-binding protein-associated factor RNA polymerase I subunit B (634 aa).

The segment at 19 to 51 (LVCEYCGHGSEYAEDDADDGFFTCRQCSAIHTS) adopts an RRN7-type zinc-finger fold. Zn(2+) contacts are provided by Cys21, Cys24, Cys42, and Cys45. The B-reader stretch occupies residues 51–80 (STQNTATNPFDFPMTPAHLSAHRRPTQPTP). The segment at 54-107 (NTATNPFDFPMTPAHLSAHRRPTQPTPTPKPFPAPRGAATGAAAPDFDDLGEPS) is disordered. Positions 77–87 (QPTPTPKPFPA) are enriched in pro residues. The segment at 81 to 83 (TPK) is B-linker. Residues 84–281 (PFPAPRGAAT…DKLLGSSLND (198 aa)) are N-terminal cyclin fold. The segment covering 88-98 (PRGAATGAAAP) has biased composition (low complexity). The C-terminal cyclin fold stretch occupies residues 282–284 (CPL).

The protein belongs to the RRN7/TAF1B family.

It is found in the nucleus. The protein resides in the nucleolus. Component of RNA polymerase I core factor complex that acts as a GTF2B/TFIIB-like factor and plays a key role in multiple steps during transcription initiation such as pre-initiation complex (PIC) assembly and postpolymerase recruitment events in polymerase I (Pol I) transcription. Binds rDNA promoters and plays a role in Pol I recruitment. This Oryza sativa subsp. japonica (Rice) protein is TATA box-binding protein-associated factor RNA polymerase I subunit B.